The chain runs to 314 residues: tRNA dimethylallyltransferase (314 aa).

Position 10–17 (10–17 (GPTAVGKT)) interacts with ATP. 12–17 (TAVGKT) contacts substrate. An interaction with substrate tRNA region spans residues 35–38 (DSMQ).

This sequence belongs to the IPP transferase family. As to quaternary structure, monomer. The cofactor is Mg(2+).

The enzyme catalyses adenosine(37) in tRNA + dimethylallyl diphosphate = N(6)-dimethylallyladenosine(37) in tRNA + diphosphate. Its function is as follows. Catalyzes the transfer of a dimethylallyl group onto the adenine at position 37 in tRNAs that read codons beginning with uridine, leading to the formation of N6-(dimethylallyl)adenosine (i(6)A). The sequence is that of tRNA dimethylallyltransferase from Clostridium novyi (strain NT).